Here is a 267-residue protein sequence, read N- to C-terminus: Dihydropteroate synthase (267 aa).

The Pterin-binding domain occupies 1 to 251; the sequence is MTKTKIMGIL…NVELNAKLAK (251 aa). N11 provides a ligand contact to Mg(2+). Residues T51, D84, N103, D167, K203, and 239–241 contribute to the (7,8-dihydropterin-6-yl)methyl diphosphate site; that span reads RVH.

It belongs to the DHPS family. As to quaternary structure, homodimer. Requires Mg(2+) as cofactor.

It catalyses the reaction (7,8-dihydropterin-6-yl)methyl diphosphate + 4-aminobenzoate = 7,8-dihydropteroate + diphosphate. It participates in cofactor biosynthesis; tetrahydrofolate biosynthesis; 7,8-dihydrofolate from 2-amino-4-hydroxy-6-hydroxymethyl-7,8-dihydropteridine diphosphate and 4-aminobenzoate: step 1/2. Catalyzes the condensation of para-aminobenzoate (pABA) with 6-hydroxymethyl-7,8-dihydropterin diphosphate (DHPt-PP) to form 7,8-dihydropteroate (H2Pte), the immediate precursor of folate derivatives. This Staphylococcus aureus (strain MRSA252) protein is Dihydropteroate synthase (folP).